Here is a 207-residue protein sequence, read N- to C-terminus: Ras-related protein Rab-7a (207 aa).

Threonine 2 is modified (N-acetylthreonine). Residues serine 17, glycine 18, valine 19, glycine 20, lysine 21, threonine 22, serine 23, serine 34, asparagine 35, tyrosine 37, and threonine 40 each coordinate GTP. Threonine 22 serves as a coordination point for Mg(2+). Residues 28–41 carry the Switch 1 motif; sequence YVNKKFSNQYKATI. Mg(2+)-binding residues include threonine 40 and aspartate 63. Glycine 66 serves as a coordination point for GTP. The Switch 2 motif lies at 67–82; the sequence is QERFQSLGVAFYRGAD. Serine 72 bears the Phosphoserine mark. GTP-binding residues include asparagine 125, lysine 126, aspartate 128, alanine 156, and lysine 157. Glycyl lysine isopeptide (Lys-Gly) (interchain with G-Cter in ubiquitin) cross-links involve residues lysine 191 and lysine 194. 2 S-geranylgeranyl cysteine lipidation sites follow: cysteine 205 and cysteine 207. Cysteine 207 is modified (cysteine methyl ester).

The protein belongs to the small GTPase superfamily. Rab family. As to quaternary structure, interacts with NTRK1/TRKA. Interacts with RILP. Interacts with PSMA7. Interacts with RNF115. Interacts with and FYCO1. Interacts with the PIK3C3/VPS34-PIK3R4 complex. The GTP-bound form interacts with OSBPL1A. The GTP-bound form interacts with RAC1. Interacts with CLN3. Interacts with CHM, the substrate-binding subunit of the Rab geranylgeranyltransferase complex. Interacts with C9orf72. Does not interact with HPS4 and the BLOC-3 complex (heterodimer of HPS1 and HPS4). Interacts with CLN5. Interacts with PLEKHM1 (via N- and C-terminus). Interacts with PRPH; the interaction is direct. Interacts with VPS13A. The GDP-bound form interacts with RIMOC1. Interacts with the MON1A-CCZ1B complex and this interaction is enhanced in the presence of RIMOC1. Interacts with VPS39 and VPS41. Forms a ternary complex with LAMP2 and RUFY4; the interaction with LAMP2 is mediated by RUFY4 (via RUN and coiled coil domains). Mg(2+) is required as a cofactor. Deubiquitination at Lys-191 and Lys-194 by USP32. Post-translationally, phosphorylated at Ser-72 by LRRK1; phosphorylation is dependent on protein kinase C (PKC) activation of LRRK1. In terms of processing, prenylated. Prenylation is required for association with cellular membranes. In terms of tissue distribution, expressed in osteoclasts and in neurons.

It is found in the cytoplasmic vesicle. The protein localises to the phagosome membrane. Its subcellular location is the late endosome membrane. It localises to the lysosome membrane. The protein resides in the melanosome membrane. It is found in the autophagosome membrane. The protein localises to the lipid droplet. Its subcellular location is the endosome membrane. It localises to the mitochondrion membrane. It carries out the reaction GTP + H2O = GDP + phosphate + H(+). Regulated by guanine nucleotide exchange factors (GEFs) which promote the exchange of bound GDP for free GTP. Regulated by GTPase activating proteins (GAPs) which increase the GTP hydrolysis activity. Inhibited by GDP dissociation inhibitors (GDIs). In terms of biological role, the small GTPases Rab are key regulators of intracellular membrane trafficking, from the formation of transport vesicles to their fusion with membranes. Rabs cycle between an inactive GDP-bound form and an active GTP-bound form that is able to recruit to membranes different sets of downstream effectors directly responsible for vesicle formation, movement, tethering and fusion. In its active state, RAB7A binds to a variety of effector proteins playing a key role in the regulation of endo-lysosomal trafficking. Governs early-to-late endosomal maturation, microtubule minus-end as well as plus-end directed endosomal migration and positioning, and endosome-lysosome transport through different protein-protein interaction cascades. Also plays a central role in growth-factor-mediated cell signaling, nutrient-transporter-mediated nutrient uptake, neurotrophin transport in the axons of neurons and lipid metabolism. Also involved in regulation of some specialized endosomal membrane trafficking, such as maturation of melanosomes, pathogen-induced phagosomes (or vacuoles) and autophagosomes. Plays a role in the maturation and acidification of phagosomes that engulf pathogens, such as S.aureus and Mycobacteria. Plays a role in the fusion of phagosomes with lysosomes. In concert with RAC1, plays a role in regulating the formation of RBs (ruffled borders) in osteoclasts. Controls the endosomal trafficking and neurite outgrowth signaling of NTRK1/TRKA. Regulates the endocytic trafficking of the EGF-EGFR complex by regulating its lysosomal degradation. Involved in the ADRB2-stimulated lipolysis through lipophagy, a cytosolic lipase-independent autophagic pathway. Required for the exosomal release of SDCBP, CD63 and syndecan. Required for vesicular trafficking and cell surface expression of ACE2. May play a role in PRPH neuronal intermediate filament assembly. This chain is Ras-related protein Rab-7a, found in Rattus norvegicus (Rat).